The chain runs to 343 residues: Allergin-1 (343 aa).

A signal peptide spans 1-19 (MWSHLNRLLFWSIFSSVTC). Residues 20 to 227 (RKAVLDCEAM…GGDSCPFCLK (208 aa)) are Extracellular-facing. Ig-like C2-type domains lie at 35 to 118 (PSPC…RDFS) and 128 to 213 (PVLN…HPVT). 6 N-linked (GlcNAc...) asparagine glycosylation sites follow: Asn51, Asn60, Asn89, Asn151, Asn157, and Asn182. Cystine bridges form between Cys56-Cys103 and Cys147-Cys196. A helical transmembrane segment spans residues 228-248 (LLLPGLLLLLVVIILILAFWV). At 249 to 343 (LPKYKTRKAM…SGYVYSELNF (95 aa)) the chain is on the cytoplasmic side. 2 short sequence motifs (ITIM motif) span residues 311–316 (LQYATP) and 336–341 (YVYSEL). Residues Tyr313 and Tyr338 each carry the phosphotyrosine modification.

As to quaternary structure, monomer. Interacts (tyrosine-phosphorylated) with PTPN6, PTPN11 and INPP5D. In terms of processing, N-glycosylated. Expressed in myeloid cells (dendritic cells, macrophages and neutrophils, weak expression on B-cells but not in T-cells or natural killer cells), peripheral blood basophils and mast cells (at protein level).

It localises to the cell membrane. Its function is as follows. Immunoglobulin-like receptor which plays an inhibitory role in degranulation of mast cells. Negatively regulates IgE-mediated mast cell activation and suppresses the type I immediate hypersensitivity reaction. The sequence is that of Allergin-1 (MILR1) from Homo sapiens (Human).